Reading from the N-terminus, the 429-residue chain is Maltoporin 2 (429 aa).

A signal peptide spans 1-25 (MMITLRKLPLAVAVAAGVMSAQALA). The span at 397 to 412 (GLQTKDSSGSGAFTSS) shows a compositional bias: polar residues. The segment at 397 to 416 (GLQTKDSSGSGAFTSSRGDD) is disordered.

Belongs to the porin LamB (TC 1.B.3) family. As to quaternary structure, homotrimer formed of three 18-stranded antiparallel beta-barrels, containing three independent channels.

It localises to the cell outer membrane. It catalyses the reaction beta-maltose(in) = beta-maltose(out). In terms of biological role, involved in the transport of maltose and maltodextrins. The protein is Maltoporin 2 of Klebsiella pneumoniae subsp. pneumoniae (strain ATCC 700721 / MGH 78578).